Consider the following 108-residue polypeptide: Peptidyl-prolyl cis-trans isomerase FKBP1C (108 aa).

The 89-residue stretch at 20-108 folds into the PPIase FKBP-type domain; the sequence is SQTCVMHYTG…VFDVELLKLE (89 aa).

It belongs to the FKBP-type PPIase family. FKBP1 subfamily.

It catalyses the reaction [protein]-peptidylproline (omega=180) = [protein]-peptidylproline (omega=0). Catalyzes the cis-trans isomerization of proline imidic peptide bonds in oligopeptides. This is Peptidyl-prolyl cis-trans isomerase FKBP1C from Homo sapiens (Human).